Consider the following 547-residue polypeptide: uncharacterized protein (547 aa).

A run of 12 helical transmembrane segments spans residues 33 to 53 (PTFF…IMVI), 107 to 127 (PLIV…GVIF), 145 to 165 (TGLI…LSFA), 203 to 223 (VYIL…FYLA), 231 to 251 (FIAI…FLLV), 263 to 283 (VAGI…LIYL), 298 to 318 (LNKI…ASFF), 351 to 371 (TLLT…FGLL), 397 to 417 (TVII…VAFG), 432 to 452 (LDLA…VATG), 470 to 490 (IVSL…FQAI), and 499 to 519 (VFIW…IAFG).

Its subcellular location is the cell membrane. This is an uncharacterized protein from Mycoplasma genitalium (strain ATCC 33530 / DSM 19775 / NCTC 10195 / G37) (Mycoplasmoides genitalium).